The primary structure comprises 126 residues: Glycine cleavage system H protein (126 aa).

The Lipoyl-binding domain maps to 21-103; sequence TVTIGISEHA…YEGGWIVKVK (83 aa). N6-lipoyllysine is present on Lys62.

Belongs to the GcvH family. The glycine cleavage system is composed of four proteins: P, T, L and H. The cofactor is (R)-lipoate.

Functionally, the glycine cleavage system catalyzes the degradation of glycine. The H protein shuttles the methylamine group of glycine from the P protein to the T protein. In Vibrio atlanticus (strain LGP32) (Vibrio splendidus (strain Mel32)), this protein is Glycine cleavage system H protein.